The sequence spans 126 residues: UPF0102 protein gll3754 (126 aa).

The protein belongs to the UPF0102 family.

The chain is UPF0102 protein gll3754 from Gloeobacter violaceus (strain ATCC 29082 / PCC 7421).